We begin with the raw amino-acid sequence, 123 residues long: Nitrogen fixation nifHD1 region GlnB-like protein 2 (123 aa).

This sequence belongs to the P(II) protein family.

In terms of biological role, could be involved in the regulation of nitrogen fixation. This chain is Nitrogen fixation nifHD1 region GlnB-like protein 2 (glnBB), found in Methanosarcina barkeri.